A 123-amino-acid chain; its full sequence is uncharacterized protein (123 aa).

This sequence to M.tuberculosis Rv0477.

This is an uncharacterized protein from Mycobacterium leprae (strain TN).